Here is a 133-residue protein sequence, read N- to C-terminus: MAGGQRLKRMADSVQRELSELIRQELKDPRLGGLVTISGVKVSPDLGYADVYVTVMGRELSDDQNEVAHRETLDILNKASGFLRQELSRRIKTRITPRLRFHYDKTNAYGNYMFGLIEKAVQDLPKRESDDKE.

Belongs to the RbfA family. In terms of assembly, monomer. Binds 30S ribosomal subunits, but not 50S ribosomal subunits or 70S ribosomes.

Its subcellular location is the cytoplasm. One of several proteins that assist in the late maturation steps of the functional core of the 30S ribosomal subunit. Associates with free 30S ribosomal subunits (but not with 30S subunits that are part of 70S ribosomes or polysomes). Required for efficient processing of 16S rRNA. May interact with the 5'-terminal helix region of 16S rRNA. The chain is Ribosome-binding factor A from Acinetobacter baumannii (strain ACICU).